The chain runs to 505 residues: RNA-splicing ligase RtcB homolog (505 aa).

Residues Asp-119, Cys-122, His-227, His-259, and His-353 each contribute to the Mn(2+) site. 226-230 (NHYAE) provides a ligand contact to GMP. GMP is bound by residues 353–354 (HN), 402–405 (GGTM), Ser-409, 428–431 (HGAG), and Lys-504. The active-site GMP-histidine intermediate is the His-428.

This sequence belongs to the RtcB family. As to quaternary structure, catalytic component of the tRNA-splicing ligase complex. Mn(2+) serves as cofactor.

The protein localises to the nucleus. Its subcellular location is the cytoplasm. The enzyme catalyses a 3'-end 3'-phospho-ribonucleotide-RNA + a 5'-end dephospho-ribonucleoside-RNA + GTP = a ribonucleotidyl-ribonucleotide-RNA + GMP + diphosphate. It carries out the reaction a 3'-end 2',3'-cyclophospho-ribonucleotide-RNA + a 5'-end dephospho-ribonucleoside-RNA + GTP + H2O = a ribonucleotidyl-ribonucleotide-RNA + GMP + diphosphate + H(+). Functionally, catalytic subunit of the tRNA-splicing ligase complex that acts by directly joining spliced tRNA halves to mature-sized tRNAs by incorporating the precursor-derived splice junction phosphate into the mature tRNA as a canonical 3',5'-phosphodiester. May act as an RNA ligase with broad substrate specificity, and may function toward other RNAs. This chain is RNA-splicing ligase RtcB homolog, found in Danio rerio (Zebrafish).